Here is a 154-residue protein sequence, read N- to C-terminus: ATP synthase subunit b (154 aa).

The chain crosses the membrane as a helical span at residues 9 to 29; sequence AIAFVIFVWFCMKYVWPPLMA.

Belongs to the ATPase B chain family. In terms of assembly, F-type ATPases have 2 components, F(1) - the catalytic core - and F(0) - the membrane proton channel. F(1) has five subunits: alpha(3), beta(3), gamma(1), delta(1), epsilon(1). F(0) has three main subunits: a(1), b(2) and c(10-14). The alpha and beta chains form an alternating ring which encloses part of the gamma chain. F(1) is attached to F(0) by a central stalk formed by the gamma and epsilon chains, while a peripheral stalk is formed by the delta and b chains.

It localises to the cell inner membrane. F(1)F(0) ATP synthase produces ATP from ADP in the presence of a proton or sodium gradient. F-type ATPases consist of two structural domains, F(1) containing the extramembraneous catalytic core and F(0) containing the membrane proton channel, linked together by a central stalk and a peripheral stalk. During catalysis, ATP synthesis in the catalytic domain of F(1) is coupled via a rotary mechanism of the central stalk subunits to proton translocation. Functionally, component of the F(0) channel, it forms part of the peripheral stalk, linking F(1) to F(0). The sequence is that of ATP synthase subunit b from Klebsiella pneumoniae subsp. pneumoniae (strain ATCC 700721 / MGH 78578).